Here is a 233-residue protein sequence, read N- to C-terminus: Probable transglycosylase IsaA (233 aa).

A signal peptide spans M1–A29.

Belongs to the transglycosylase family. IsaA subfamily.

It localises to the secreted. Functionally, is able to cleave peptidoglycan. The sequence is that of Probable transglycosylase IsaA (isaA) from Staphylococcus aureus (strain USA300).